The primary structure comprises 134 residues: Small ribosomal subunit protein uS11 (134 aa).

Disordered stretches follow at residues 1–24 (MPPK…VAHG) and 115–134 (IQDV…RRRV). The segment covering 9-18 (AVKKVRRKEK) has biased composition (basic residues).

The protein belongs to the universal ribosomal protein uS11 family. Part of the 30S ribosomal subunit. Interacts with proteins S7 and S18. Binds to IF-3.

Its function is as follows. Located on the platform of the 30S subunit, it bridges several disparate RNA helices of the 16S rRNA. Forms part of the Shine-Dalgarno cleft in the 70S ribosome. The polypeptide is Small ribosomal subunit protein uS11 (Saccharopolyspora erythraea (strain ATCC 11635 / DSM 40517 / JCM 4748 / NBRC 13426 / NCIMB 8594 / NRRL 2338)).